Here is a 481-residue protein sequence, read N- to C-terminus: UDP-glycosyltransferase 88F4 (481 aa).

Residues Ser-288, 357-358 (WA), 375-383 (HCGWNSVLE), and 397-400 (YAEQ) each bind UDP-alpha-D-glucose.

Belongs to the UDP-glycosyltransferase family.

Functionally, glycosyltransferase that may possess chalcone and dihydrochalcone 2'-O-glucosyltransferase activity. This Malus domestica (Apple) protein is UDP-glycosyltransferase 88F4.